The sequence spans 338 residues: Anthranilate phosphoribosyltransferase (338 aa).

Residues Gly81, 84 to 85 (GD), Thr89, 91 to 94 (NIST), 109 to 117 (KHGNRALSS), and Ala121 contribute to the 5-phospho-alpha-D-ribose 1-diphosphate site. Gly81 serves as a coordination point for anthranilate. Mg(2+) is bound at residue Ser93. Asn112 contacts anthranilate. Arg167 is an anthranilate binding site. Mg(2+) is bound by residues Asp225 and Glu226.

The protein belongs to the anthranilate phosphoribosyltransferase family. In terms of assembly, homodimer. It depends on Mg(2+) as a cofactor.

The catalysed reaction is N-(5-phospho-beta-D-ribosyl)anthranilate + diphosphate = 5-phospho-alpha-D-ribose 1-diphosphate + anthranilate. The protein operates within amino-acid biosynthesis; L-tryptophan biosynthesis; L-tryptophan from chorismate: step 2/5. Functionally, catalyzes the transfer of the phosphoribosyl group of 5-phosphorylribose-1-pyrophosphate (PRPP) to anthranilate to yield N-(5'-phosphoribosyl)-anthranilate (PRA). This is Anthranilate phosphoribosyltransferase from Rhizobium johnstonii (strain DSM 114642 / LMG 32736 / 3841) (Rhizobium leguminosarum bv. viciae).